The following is a 488-amino-acid chain: Glutamyl-tRNA(Gln) amidotransferase subunit A (488 aa).

Catalysis depends on charge relay system residues Lys77 and Ser152. Residue Ser176 is the Acyl-ester intermediate of the active site.

Belongs to the amidase family. GatA subfamily. As to quaternary structure, heterotrimer of A, B and C subunits.

The catalysed reaction is L-glutamyl-tRNA(Gln) + L-glutamine + ATP + H2O = L-glutaminyl-tRNA(Gln) + L-glutamate + ADP + phosphate + H(+). Allows the formation of correctly charged Gln-tRNA(Gln) through the transamidation of misacylated Glu-tRNA(Gln) in organisms which lack glutaminyl-tRNA synthetase. The reaction takes place in the presence of glutamine and ATP through an activated gamma-phospho-Glu-tRNA(Gln). This chain is Glutamyl-tRNA(Gln) amidotransferase subunit A, found in Streptococcus equi subsp. zooepidemicus (strain H70).